A 91-amino-acid chain; its full sequence is DNA-directed RNA polymerase subunit Rpo11 (91 aa).

This sequence belongs to the archaeal Rpo11/eukaryotic RPB11/RPC19 RNA polymerase subunit family. In terms of assembly, part of the RNA polymerase complex.

It localises to the cytoplasm. It carries out the reaction RNA(n) + a ribonucleoside 5'-triphosphate = RNA(n+1) + diphosphate. DNA-dependent RNA polymerase (RNAP) catalyzes the transcription of DNA into RNA using the four ribonucleoside triphosphates as substrates. The polypeptide is DNA-directed RNA polymerase subunit Rpo11 (Methanococcoides burtonii (strain DSM 6242 / NBRC 107633 / OCM 468 / ACE-M)).